Here is a 165-residue protein sequence, read N- to C-terminus: SsrA-binding protein (165 aa).

A compositionally biased stretch (basic and acidic residues) spans 135–158 (QAHDKRQDMARRDAQREVTRELGR). The segment at 135 to 165 (QAHDKRQDMARRDAQREVTRELGRRVKGMTN) is disordered.

It belongs to the SmpB family.

Its subcellular location is the cytoplasm. Functionally, required for rescue of stalled ribosomes mediated by trans-translation. Binds to transfer-messenger RNA (tmRNA), required for stable association of tmRNA with ribosomes. tmRNA and SmpB together mimic tRNA shape, replacing the anticodon stem-loop with SmpB. tmRNA is encoded by the ssrA gene; the 2 termini fold to resemble tRNA(Ala) and it encodes a 'tag peptide', a short internal open reading frame. During trans-translation Ala-aminoacylated tmRNA acts like a tRNA, entering the A-site of stalled ribosomes, displacing the stalled mRNA. The ribosome then switches to translate the ORF on the tmRNA; the nascent peptide is terminated with the 'tag peptide' encoded by the tmRNA and targeted for degradation. The ribosome is freed to recommence translation, which seems to be the essential function of trans-translation. This Mycolicibacterium gilvum (strain PYR-GCK) (Mycobacterium gilvum (strain PYR-GCK)) protein is SsrA-binding protein.